We begin with the raw amino-acid sequence, 1031 residues long: Error-prone DNA polymerase (1031 aa).

The protein belongs to the DNA polymerase type-C family. DnaE2 subfamily.

The protein localises to the cytoplasm. The enzyme catalyses DNA(n) + a 2'-deoxyribonucleoside 5'-triphosphate = DNA(n+1) + diphosphate. DNA polymerase involved in damage-induced mutagenesis and translesion synthesis (TLS). It is not the major replicative DNA polymerase. The protein is Error-prone DNA polymerase of Pseudomonas syringae pv. syringae (strain B728a).